Here is an 879-residue protein sequence, read N- to C-terminus: Metabotropic glutamate receptor 3 (879 aa).

The first 24 residues, 1–24, serve as a signal peptide directing secretion; that stretch reads MKMLTRLQVLTLALFSKGFLLSLG. The Extracellular segment spans residues 25–577; that stretch reads DHNFLRREIK…DYIRWEDAWA (553 aa). C57 and C99 are joined by a disulfide. Residues S151 and 172 to 174 contribute to the L-glutamate site; that span reads AST. N209 carries N-linked (GlcNAc...) asparagine glycosylation. L-glutamate is bound at residue Y222. 7 disulfides stabilise this stretch: C240–C527, C361–C373, C412–C419, C509–C528, C513–C531, C534–C546, and C549–C562. Residue N292 is glycosylated (N-linked (GlcNAc...) asparagine). D301 provides a ligand contact to L-glutamate. Residue K389 participates in L-glutamate binding. N414 and N439 each carry an N-linked (GlcNAc...) asparagine glycan. Residues 578 to 598 traverse the membrane as a helical segment; it reads IGPVTIACLGFMCTCMVITVF. Residues 599–613 are Cytoplasmic-facing; it reads IKHNNTPLVKASGRE. The helical transmembrane segment at 614–634 threads the bilayer; sequence LCYILLFGVGLSYCMTFFFIA. At 635–688 the chain is on the extracellular side; the sequence is KPSPVICALRRLGLGSSFAICYSALLTKTNCIARIFDGVKNGAQRPKFISPSSQ. The helical transmembrane segment at 689–709 threads the bilayer; that stretch reads VFICLGLILVQIVMVSVWLIL. Residues 710–735 lie on the Cytoplasmic side of the membrane; that stretch reads EAPGTRRYTLAEKRETVILKCNVKDS. A helical membrane pass occupies residues 736 to 756; it reads SMLISLTYDVILVILCTVYAF. The Extracellular segment spans residues 757–769; it reads KTRKCPENFNEAK. A helical membrane pass occupies residues 770–790; it reads FIGFTMYTTCIIWLAFLPIFY. Residues 791 to 807 are Cytoplasmic-facing; sequence VTSSDYRVQTTTMCISV. Residues 808 to 828 traverse the membrane as a helical segment; it reads SLSGFVVLGCLFAPKVHIILF. Topologically, residues 829–879 are extracellular; that stretch reads QPQKNVVTHRLHLNRFSVSGTGTTYSQSSASMYVPTVCNGREVLDSTTSSL.

Belongs to the G-protein coupled receptor 3 family. Interacts with TAMALIN.

It localises to the cell membrane. G-protein coupled receptor for glutamate. Ligand binding causes a conformation change that triggers signaling via guanine nucleotide-binding proteins (G proteins) and modulates the activity of down-stream effectors. Signaling inhibits adenylate cyclase activity. The protein is Metabotropic glutamate receptor 3 (GRM3) of Macaca fascicularis (Crab-eating macaque).